The primary structure comprises 165 residues: Growth arrest and DNA damage-inducible protein GADD45 alpha (165 aa).

At Thr2 the chain carries Phosphothreonine.

This sequence belongs to the GADD45 family. In terms of assembly, interacts with AURKA, PCNA, GADD45GIP1 and MAPK14.

Its subcellular location is the nucleus. Its function is as follows. Might affect PCNA interaction with some CDK (cell division protein kinase) complexes; stimulates DNA excision repair in vitro and inhibits entry of cells into S phase. In T-cells, functions as a regulator of p38 MAPKs by inhibiting p88 phosphorylation and activity. This Bos taurus (Bovine) protein is Growth arrest and DNA damage-inducible protein GADD45 alpha (GADD45A).